Here is an 84-residue protein sequence, read N- to C-terminus: Putative defensin-like protein 38 (84 aa).

The N-terminal stretch at Met1–Ala26 is a signal peptide. Intrachain disulfides connect Cys28/Cys84, Cys41/Cys65, Cys50/Cys76, and Cys54/Cys78.

The protein belongs to the DEFL family.

Its subcellular location is the secreted. In Arabidopsis thaliana (Mouse-ear cress), this protein is Putative defensin-like protein 38.